The primary structure comprises 349 residues: 4-hydroxy-3-methylbut-2-en-1-yl diphosphate synthase (flavodoxin) (349 aa).

Positions 264, 267, 299, and 306 each coordinate [4Fe-4S] cluster.

Belongs to the IspG family. [4Fe-4S] cluster serves as cofactor.

The enzyme catalyses (2E)-4-hydroxy-3-methylbut-2-enyl diphosphate + oxidized [flavodoxin] + H2O + 2 H(+) = 2-C-methyl-D-erythritol 2,4-cyclic diphosphate + reduced [flavodoxin]. The protein operates within isoprenoid biosynthesis; isopentenyl diphosphate biosynthesis via DXP pathway; isopentenyl diphosphate from 1-deoxy-D-xylulose 5-phosphate: step 5/6. In terms of biological role, converts 2C-methyl-D-erythritol 2,4-cyclodiphosphate (ME-2,4cPP) into 1-hydroxy-2-methyl-2-(E)-butenyl 4-diphosphate. In Clostridium perfringens (strain 13 / Type A), this protein is 4-hydroxy-3-methylbut-2-en-1-yl diphosphate synthase (flavodoxin).